Reading from the N-terminus, the 650-residue chain is Aminopeptidase B (650 aa).

Residue 298 to 302 (GGMEN) coordinates substrate. Residue His-325 coordinates Zn(2+). Glu-326 serves as the catalytic Proton acceptor. Residues His-329 and Glu-348 each contribute to the Zn(2+) site. Position 446 is an N6-acetyllysine (Lys-446).

Belongs to the peptidase M1 family. Monomer. Zn(2+) is required as a cofactor.

The protein localises to the secreted. The catalysed reaction is Release of N-terminal Arg and Lys from oligopeptides when P1' is not Pro. Also acts on arylamides of Arg and Lys.. Its function is as follows. Exopeptidase which selectively removes arginine and/or lysine residues from the N-terminus of several peptide substrates including Arg(0)-Leu-enkephalin, Arg(0)-Met-enkephalin and Arg(-1)-Lys(0)-somatostatin-14. Can hydrolyze leukotriene A4 (LTA-4) into leukotriene B4 (LTB-4). The polypeptide is Aminopeptidase B (Rnpep) (Mus musculus (Mouse)).